Here is a 413-residue protein sequence, read N- to C-terminus: Protein arginine N-methyltransferase 2 (413 aa).

Residues 148–187 (LDGSDTEMGDKGGSARDVPASADSAPADSAGHSSSEPTAV) form a disordered region. Positions 162–182 (ARDVPASADSAPADSAGHSSS) are enriched in low complexity. The RMT2 domain occupies 192–413 (TAAHQDTYLQ…HYYHPEISFQ (222 aa)). Residues Y199, M229, 252–257 (FGMGII), 273–275 (EAH), 300–301 (WQ), and D321 contribute to the S-adenosyl-L-methionine site.

The protein belongs to the class I-like SAM-binding methyltransferase superfamily. RMT2 methyltransferase family. As to quaternary structure, monomer.

It localises to the cytoplasm. The protein resides in the nucleus. In terms of biological role, S-adenosyl-L-methionine-dependent protein-arginine N-methyltransferase that methylates the delta-nitrogen atom of arginine residues to form N5-methylarginine (type IV) in target proteins. Monomethylates ribosomal protein L12. The chain is Protein arginine N-methyltransferase 2 from Eremothecium gossypii (strain ATCC 10895 / CBS 109.51 / FGSC 9923 / NRRL Y-1056) (Yeast).